We begin with the raw amino-acid sequence, 532 residues long: 2-isopropylmalate synthase (532 aa).

The Pyruvate carboxyltransferase domain occupies 5 to 267 (VIIFDTTLRD…HTNINHQEIY (263 aa)). Aspartate 14, histidine 202, histidine 204, and asparagine 238 together coordinate Mn(2+). Residues 392-532 (HLDYFSVQSG…SKQQNSQETV (141 aa)) are regulatory domain. Residues 513–532 (QQHNNQQQNDSKQQNSQETV) form a disordered region.

It belongs to the alpha-IPM synthase/homocitrate synthase family. LeuA type 1 subfamily. In terms of assembly, homodimer. The cofactor is Mn(2+).

The protein resides in the cytoplasm. The enzyme catalyses 3-methyl-2-oxobutanoate + acetyl-CoA + H2O = (2S)-2-isopropylmalate + CoA + H(+). Its pathway is amino-acid biosynthesis; L-leucine biosynthesis; L-leucine from 3-methyl-2-oxobutanoate: step 1/4. Its function is as follows. Catalyzes the condensation of the acetyl group of acetyl-CoA with 3-methyl-2-oxobutanoate (2-ketoisovalerate) to form 3-carboxy-3-hydroxy-4-methylpentanoate (2-isopropylmalate). This chain is 2-isopropylmalate synthase, found in Pectobacterium atrosepticum (strain SCRI 1043 / ATCC BAA-672) (Erwinia carotovora subsp. atroseptica).